The primary structure comprises 427 residues: Trigger factor (427 aa).

One can recognise a PPIase FKBP-type domain in the interval 163 to 248 (GNIAIIDFKG…VKGIKAKELP (86 aa)).

Belongs to the FKBP-type PPIase family. Tig subfamily.

Its subcellular location is the cytoplasm. The catalysed reaction is [protein]-peptidylproline (omega=180) = [protein]-peptidylproline (omega=0). In terms of biological role, involved in protein export. Acts as a chaperone by maintaining the newly synthesized protein in an open conformation. Functions as a peptidyl-prolyl cis-trans isomerase. The polypeptide is Trigger factor (Clostridium botulinum (strain Eklund 17B / Type B)).